The sequence spans 978 residues: RMPSGPGHYGASAETPGPRPPLCPASSCCLPTEAMGPRALLVLLMATAWHAQGVPVIQPSGPELVVEPGTTVTLRCVGNGSVEWDGPISPHWNLDLDPPSSILTTNNATFQNTGTYHCTEPGNPRGGNATIHLYVKDPARPWKVLAQEVTVLEGQDALLPCLLTDPALEAGVSLVRVRGRPVLRQTNYSFSPWHGFTIHKAKFIENHVYQCSARVDGRTVTSMGIWLKVQKDISGPATLTLEPAELVRIQGEAAQIVCSASNIDVNFDVSLRHGDTKLTISQQSDFHDNRYQKVLTLNLDHVSFQDAGNYSCTATNAWGNHSASMVFRVVESAYSNLTSEQSLLQEVTVGEKVDLQVKVEAYPGLESFNWTYLGPFSDYQDKLDFVTIKDTYRYTSTLSLPRLKRSESGRYSFLARNAGGQNALTFELTLRYPPEVRVTMTLINGSDTLLCEASGYPQPSVTWVQCRSHTDRCDESAGLVLEDSHSEVLSQVPFYEVIVHSLLAIGTLEHNRTYECRAFNSVGNSSQTFWPISIGAHTPLPDELLFTPVLLTCMSIMALLLLLLLLLLYKYKQKPKYQVRWKIIESYEGNSYTFIDPTQLPYNEKWEFPRNNLQFGKTLGTGAFGKVVEATAFGLGKEDAVLKVAVKMLKSTAHADEKEALMSELKIMSHLGQHENIVNLLGACTHGGPVLVITEYCCYGDLLNFLRRQAEAMLGPSLSVGQDPEAGAGYKNIHLEKKYVRRDSGFSSQGVDTYVEMRPVSTSSSNDSFSEEDLGKEDGRPLELRDLLHFSSQVAQGMAFLASKNCIHRDVAARNVLLTSGRVAKIGDFGLARDIMNDSNYIVKGNARLPVKWMAPESIFDCVYTVQSDVWSYGILLWEIFSLGLNPYPGILVNSKFYKLVKDGYQMAQPAFAPKNIYSIMQACWALEPTRRPTFQQICSLLQKQAQEDRRVPNYTNLPSSSSSRLLRPWQRTPPVAR.

The Extracellular portion of the chain corresponds to 1-543; the sequence is RMPSGPGHYG…IGAHTPLPDE (543 aa). Ig-like C2-type domains are found at residues 55-134, 141-231, 236-331, 333-431, and 434-533; these read PVIQ…IHLY, PWKV…KVQK, PATL…RVVE, AYSN…LTLR, and PEVR…WPIS. An intrachain disulfide couples C76 to C118. N-linked (GlcNAc...) asparagine; by host glycans are attached at residues N79, N107, N128, N187, N309, N320, N336, N369, N444, N511, and N524. 2 disulfide bridges follow: C161/C211 and C258/C312. A disulfide bridge links C451 with C516. The helical transmembrane segment at 544–568 threads the bilayer; it reads LLFTPVLLTCMSIMALLLLLLLLLL. Residues 569–978 are Cytoplasmic-facing; it reads YKYKQKPKYQ…PWQRTPPVAR (410 aa). Positions 613–942 constitute a Protein kinase domain; that stretch reads LQFGKTLGTG…PTFQQICSLL (330 aa). Residues 619-627 and K647 each bind ATP; that span reads LGTGAFGKV. Residue D810 is the Proton acceptor of the active site. A Phosphotyrosine; by autocatalysis modification is found at Y841. The segment at 952–978 is disordered; the sequence is VPNYTNLPSSSSSRLLRPWQRTPPVAR. Residues 958 to 969 are compositionally biased toward low complexity; the sequence is LPSSSSSRLLRP. T973 is subject to Phosphothreonine.

Belongs to the protein kinase superfamily. Tyr protein kinase family. CSF-1/PDGF receptor subfamily.

Its subcellular location is the membrane. It carries out the reaction L-tyrosyl-[protein] + ATP = O-phospho-L-tyrosyl-[protein] + ADP + H(+). Truncated version of the receptor for colony-stimulating factor 1 (CSF-1). In Felidae (cat family), this protein is Tyrosine-protein kinase transforming protein fms (V-FMS).